The sequence spans 145 residues: Ribonuclease HI (145 aa).

An RNase H type-1 domain is found at 1–142 (MNQTVYLYTD…ADDLANRGAA (142 aa)). Mg(2+) is bound by residues D10, E48, D70, and D134.

This sequence belongs to the RNase H family. Monomer. Requires Mg(2+) as cofactor.

It localises to the cytoplasm. It carries out the reaction Endonucleolytic cleavage to 5'-phosphomonoester.. Endonuclease that specifically degrades the RNA of RNA-DNA hybrids. The chain is Ribonuclease HI from Neisseria meningitidis serogroup A / serotype 4A (strain DSM 15465 / Z2491).